A 307-amino-acid chain; its full sequence is Tropinone reductase homolog At2g29340 (307 aa).

Residue 13–37 participates in NADP(+) binding; that stretch reads LVTGGASGIGYAIVEELAGFGARIH. Position 146 (serine 146) interacts with substrate. Catalysis depends on tyrosine 159, which acts as the Proton acceptor.

The protein belongs to the short-chain dehydrogenases/reductases (SDR) family. SDR65C subfamily.

In Arabidopsis thaliana (Mouse-ear cress), this protein is Tropinone reductase homolog At2g29340.